The following is a 758-amino-acid chain: Putative transcriptional regulatory protein YJL206C (758 aa).

A DNA-binding region (zn(2)-C6 fungal-type) is located at residues 47–73; it reads CIACRKRKVRCSGNIPCRLCQTNSYEC.

The protein belongs to the ASG1 family.

The protein resides in the nucleus. This is Putative transcriptional regulatory protein YJL206C from Saccharomyces cerevisiae (strain ATCC 204508 / S288c) (Baker's yeast).